A 776-amino-acid chain; its full sequence is Glucocorticoid receptor (776 aa).

The segment covering 1–11 has biased composition (polar residues); it reads MDSKESLTSPS. The segment at 1–25 is disordered; sequence MDSKESLTSPSEEIPSSVHGQERGN. Residues 1 to 419 form a modulating region; sequence MDSKESLTSP…LSAVGPPPKF (419 aa). Threonine 8 carries the post-translational modification Phosphothreonine. Arginine 23 carries the omega-N-methylarginine modification. Phosphoserine is present on residues serine 45, serine 113, and serine 134. Residues 157–178 are disordered; it reads PETPSDVSSEQQNLKGQTGTNG. Residues 161-174 show a composition bias toward polar residues; it reads SDVSSEQQNLKGQT. Residues serine 203, serine 211, and serine 226 each carry the phosphoserine modification. Lysine 258 participates in a covalent cross-link: Glycyl lysine isopeptide (Lys-Gly) (interchain with G-Cter in SUMO2). Serine 267 carries the post-translational modification Phosphoserine. Residues lysine 277 and lysine 293 each participate in a glycyl lysine isopeptide (Lys-Gly) (interchain with G-Cter in SUMO); alternate cross-link. Residues lysine 277 and lysine 293 each participate in a glycyl lysine isopeptide (Lys-Gly) (interchain with G-Cter in SUMO2); alternate cross-link. A phosphoserine mark is found at serine 307 and serine 404. A DNA-binding region (nuclear receptor) is located at residues 417-492; the sequence is PKFCLVCSDE…AGMNLEARKT (76 aa). Lysine 418 is covalently cross-linked (Glycyl lysine isopeptide (Lys-Gly) (interchain with G-Cter in ubiquitin)). 2 NR C4-type zinc fingers span residues 420 to 440 and 456 to 480; these read CLVCSDEASGCHYGVLTCGSC and CAGRNDCIIDKIRRKNCPACRYRKC. An N6-acetyllysine mark is found at lysine 479, lysine 491, lysine 493, and lysine 494. Residues 484-776 form an interaction with CLOCK region; that stretch reads GMNLEARKTK…NIKKLLFHQK (293 aa). Residues 486–522 are hinge; it reads NLEARKTKKKIKGIQQTTTGISQETPENSANKTIVPA. The NR LBD domain occupies 523 to 757; the sequence is TLPQLTPTPV…FPEMLAEIIT (235 aa). An interaction with CRY1 region spans residues 531–696; sequence PVSLLEVIEP…EIRMTYIKEL (166 aa). Lysine 702 participates in a covalent cross-link: Glycyl lysine isopeptide (Lys-Gly) (interchain with G-Cter in SUMO).

It belongs to the nuclear hormone receptor family. NR3 subfamily. Heteromultimeric cytoplasmic complex with HSP90AA1, HSPA1A/HSPA1B, and FKBP5 or another immunophilin such as PPID, STIP1, or the immunophilin homolog PPP5C. Upon ligand binding FKBP5 dissociates from the complex and FKBP4 takes its place, thereby linking the complex to dynein and mediating transport to the nucleus, where the complex dissociates. Probably forms a complex composed of chaperones HSP90 and HSP70, co-chaperones CDC37, PPP5C, TSC1 and client protein TSC2, CDK4, AKT, RAF1 and NR3C1; this complex does not contain co-chaperones STIP1/HOP and PTGES3/p23. Directly interacts with UNC45A. Binds to DNA as a homodimer, and as heterodimer with NR3C2 or the retinoid X receptor. Binds STAT5A and STAT5B homodimers and heterodimers. Interacts with NRIP1, POU2F1, POU2F2 and TRIM28. Interacts with several coactivator complexes, including the SMARCA4 complex, CREBBP/EP300, TADA2L (Ada complex) and p160 coactivators such as NCOA2 and NCOA6. Interaction with BAG1 inhibits transactivation. Interacts with HEXIM1 and TGFB1I1. Interacts with NCOA1. Interacts with NCOA3, SMARCA4, SMARCC1, SMARCD1, and SMARCE1. Interacts with CLOCK, CRY1 and CRY2 in a ligand-dependent fashion. Interacts with CIART. Interacts with RWDD3. Interacts with UBE2I/UBC9 and this interaction is enhanced in the presence of RWDD3. Interacts with GRIP1. Interacts with NR4A3 (via nuclear receptor DNA-binding domain), represses transcription activity of NR4A3 on the POMC promoter Nur response element (NurRE). Directly interacts with PNRC2 to attract and form a complex with UPF1 and DCP1A; the interaction leads to rapid mRNA degradation. Interacts with GSK3B. Interacts with FNIP1 and FNIP2. Interacts (via C-terminus) with NR3C1 (via C-terminus). Interacts with MCM3AP. Interacts (via domain NR LBD) with HSP90AA1 and HSP90AB1. In the absence of hormonal ligand, interacts with TACC1. In terms of processing, acetylation by CLOCK reduces its binding to glucocorticoid response elements and its transcriptional activity. Increased proteasome-mediated degradation in response to glucocorticoids. Post-translationally, phosphorylated in the absence of hormone; becomes hyperphosphorylated in the presence of glucocorticoid. The Ser-203, Ser-226 and Ser-404-phosphorylated forms are mainly cytoplasmic, and the Ser-211-phosphorylated form is nuclear. Phosphorylation at Ser-211 increases transcriptional activity. Phosphorylation at Ser-203, Ser-226 and Ser-404 decreases signaling capacity. Phosphorylation at Ser-404 may protect from glucocorticoid-induced apoptosis. Phosphorylation at Ser-203 and Ser-211 is not required in regulation of chromosome segregation. May be dephosphorylated by PPP5C, attenuates NR3C1 action. In terms of processing, sumoylation at Lys-277 and Lys-293 negatively regulates its transcriptional activity. Sumoylation at Lys-702 positively regulates its transcriptional activity in the presence of RWDD3. Sumoylation at Lys-277 and Lys-293 is dispensable whereas sumoylation at Lys-702 is critical for the stimulatory effect of RWDD3 on its transcriptional activity. Heat shock increases sumoylation in a RWDD3-dependent manner. Ubiquitinated by UBR5, leading to its degradation: UBR5 specifically recognizes and binds ligand-bound NR3C1 when it is not associated with coactivators (NCOAs). In presence of NCOAs, the UBR5-degron is not accessible, preventing its ubiquitination and degradation.

Its subcellular location is the cytoplasm. The protein localises to the nucleus. It is found in the mitochondrion. It localises to the cytoskeleton. The protein resides in the spindle. Its subcellular location is the microtubule organizing center. The protein localises to the centrosome. It is found in the chromosome. It localises to the nucleoplasm. Its function is as follows. Receptor for glucocorticoids (GC). Has a dual mode of action: as a transcription factor that binds to glucocorticoid response elements (GRE), both for nuclear and mitochondrial DNA, and as a modulator of other transcription factors. Affects inflammatory responses, cellular proliferation and differentiation in target tissues. Involved in chromatin remodeling. Plays a role in rapid mRNA degradation by binding to the 5' UTR of target mRNAs and interacting with PNRC2 in a ligand-dependent manner which recruits the RNA helicase UPF1 and the mRNA-decapping enzyme DCP1A, leading to RNA decay. Could act as a coactivator for STAT5-dependent transcription upon growth hormone (GH) stimulation and could reveal an essential role of hepatic GR in the control of body growth. Mediates glucocorticoid-induced apoptosis. Promotes accurate chromosome segregation during mitosis. May act as a tumor suppressor. May play a negative role in adipogenesis through the regulation of lipolytic and antilipogenic gene expression. The protein is Glucocorticoid receptor (NR3C1) of Tupaia belangeri (Common tree shrew).